The sequence spans 617 residues: 1-deoxy-D-xylulose-5-phosphate synthase (617 aa).

Residues histidine 76 and 117–119 each bind thiamine diphosphate; that span reads GHS. Position 148 (aspartate 148) interacts with Mg(2+). Thiamine diphosphate-binding positions include 149-150, asparagine 177, tyrosine 285, and glutamate 366; that span reads GA. Residue asparagine 177 coordinates Mg(2+).

It belongs to the transketolase family. DXPS subfamily. In terms of assembly, homodimer. Requires Mg(2+) as cofactor. Thiamine diphosphate is required as a cofactor.

It carries out the reaction D-glyceraldehyde 3-phosphate + pyruvate + H(+) = 1-deoxy-D-xylulose 5-phosphate + CO2. It participates in metabolic intermediate biosynthesis; 1-deoxy-D-xylulose 5-phosphate biosynthesis; 1-deoxy-D-xylulose 5-phosphate from D-glyceraldehyde 3-phosphate and pyruvate: step 1/1. Its function is as follows. Catalyzes the acyloin condensation reaction between C atoms 2 and 3 of pyruvate and glyceraldehyde 3-phosphate to yield 1-deoxy-D-xylulose-5-phosphate (DXP). This is 1-deoxy-D-xylulose-5-phosphate synthase from Histophilus somni (strain 129Pt) (Haemophilus somnus).